The sequence spans 102 residues: DET1- and DDB1-associated protein 1 (102 aa).

A2 is modified (N-acetylalanine). S33 is subject to Phosphoserine. Composition is skewed to basic and acidic residues over residues 66–75 (KNAAKKRDQE) and 91–102 (ARTDSPDMHEDT). The tract at residues 66-102 (KNAAKKRDQEQVELEGESSAPPRKVARTDSPDMHEDT) is disordered. At S95 the chain carries Phosphoserine.

The protein belongs to the DDA1 family. As to quaternary structure, component of numerous DCX (DDB1-CUL4-X-box) E3 ubiquitin-protein ligase complexes which consist of a core of DDB1, cullin-4 (CUL4A or CUL4B), DDA1 and RBX1. Component of the DCX(DCAF15) complex, also named CLR4(DCAF15) complex, composed of DCAF15, DDB1, cullin-4 (CUL4A or CUL4B), DDA1 and RBX1. Part of the DDD core complex containing DET1, DDA1 and DDB1; the DDD core complex recruits a specific UBE2E enzyme, such as UBE2E1, UBE2E2 UBE2E3, to form specific DDD-E2 complexes.

The protein operates within protein modification; protein ubiquitination. In terms of biological role, functions as a component of numerous distinct DCX (DDB1-CUL4-X-box) E3 ubiquitin-protein ligase complexes which mediate the ubiquitination and subsequent proteasomal degradation of target proteins. In the DCX complexes, acts as a scaffolding subunit required to stabilize the complex. This is DET1- and DDB1-associated protein 1 from Bos taurus (Bovine).